The following is a 61-amino-acid chain: Small ribosomal subunit protein uS14 (61 aa).

Zn(2+) is bound by residues Cys24, Cys27, Cys40, and Cys43.

It belongs to the universal ribosomal protein uS14 family. Zinc-binding uS14 subfamily. As to quaternary structure, part of the 30S ribosomal subunit. Contacts proteins S3 and S10. The cofactor is Zn(2+).

Binds 16S rRNA, required for the assembly of 30S particles and may also be responsible for determining the conformation of the 16S rRNA at the A site. In Pseudothermotoga lettingae (strain ATCC BAA-301 / DSM 14385 / NBRC 107922 / TMO) (Thermotoga lettingae), this protein is Small ribosomal subunit protein uS14.